The sequence spans 773 residues: Ion-translocating oxidoreductase complex subunit C (773 aa).

4Fe-4S ferredoxin-type domains are found at residues 368-398 and 408-437; these read ELTSSDNEMACIRCGQCAEACPVSLLPQQLQ and KCEELDLKDCIECGACAYVCPSEIPLVQYY. [4Fe-4S] cluster is bound by residues cysteine 378, cysteine 381, cysteine 384, cysteine 388, cysteine 417, cysteine 420, cysteine 423, and cysteine 427. Residues 460-490 are compositionally biased toward basic and acidic residues; the sequence is RFEEKKARMERDKAERENRFKQAAEDRRKEM. 2 disordered regions span residues 460 to 496 and 533 to 773; these read RFEEKKARMERDKAERENRFKQAAEDRRKEMQQQGGS and AKQA…EEKD. The segment covering 533–545 has biased composition (low complexity); the sequence is AKQAEAAQSGASE. The span at 550–572 shows a compositional bias: basic and acidic residues; it reads EMAKLREERKRQARERKAQKGEV. Low complexity predominate over residues 605–618; it reads TESAAQPAQATPSS. 4 stretches are compositionally biased toward polar residues: residues 643-657, 684-697, 724-737, and 761-773; these read GTESTAQPAQATPSS, TESTAQPAQATPSS, TKSTAQPEQATPSS, and QQSSSNLNAEEKD.

Belongs to the 4Fe4S bacterial-type ferredoxin family. RnfC subfamily. As to quaternary structure, the complex is composed of six subunits: RnfA, RnfB, RnfC, RnfD, RnfE and RnfG. The cofactor is [4Fe-4S] cluster.

Its subcellular location is the cell inner membrane. Part of a membrane-bound complex that couples electron transfer with translocation of ions across the membrane. The protein is Ion-translocating oxidoreductase complex subunit C of Vibrio cholerae serotype O1 (strain ATCC 39541 / Classical Ogawa 395 / O395).